The primary structure comprises 261 residues: Zinc finger protein 664 (261 aa).

C2H2-type zinc fingers lie at residues 3–25 (YKCPMCREFFSERADLFMHQKIH), 31–53 (HKCDKCDKGFFHISELHIHWRDH), 59–81 (YKCDDCGKDFSTTTKLNRHKKIH), 87–109 (YKCYECGKAFNWSSHLQIHMRVH), 115–137 (YVCSECGRGFSNSSNLCMHQRVH), 143–165 (FKCEECGKAFRHTSSLCMHQRVH), 171–193 (YKCYECGKAFSQSSSLCIHQRVH), 199–221 (YRCCGCGKAFSQSSSLCIHQRVH), and 227–249 (FKCDECGKAFSQSTSLCIHQRVH). Lys257 participates in a covalent cross-link: Glycyl lysine isopeptide (Lys-Gly) (interchain with G-Cter in SUMO2).

The protein belongs to the krueppel C2H2-type zinc-finger protein family.

It is found in the nucleus. Its function is as follows. May be involved in transcriptional regulation. In Homo sapiens (Human), this protein is Zinc finger protein 664.